The sequence spans 273 residues: Undecaprenyl-diphosphatase (273 aa).

8 consecutive transmembrane segments (helical) span residues 13 to 35 (LGVV…IIVG), 45 to 65 (ANTF…VMFW), 90 to 110 (LSLI…LIFH), 116 to 136 (LFNP…LIAA), 157 to 177 (AFVI…RSGA), 190 to 210 (YAAS…ATVL), 222 to 242 (GDVP…LIAI), and 252 to 272 (ISFI…YVVF).

It belongs to the UppP family.

The protein resides in the cell inner membrane. The enzyme catalyses di-trans,octa-cis-undecaprenyl diphosphate + H2O = di-trans,octa-cis-undecaprenyl phosphate + phosphate + H(+). In terms of biological role, catalyzes the dephosphorylation of undecaprenyl diphosphate (UPP). Confers resistance to bacitracin. The sequence is that of Undecaprenyl-diphosphatase from Klebsiella pneumoniae subsp. pneumoniae (strain ATCC 700721 / MGH 78578).